Reading from the N-terminus, the 264-residue chain is Rano class II histocompatibility antigen, D-1 beta chain (264 aa).

The first 26 residues, 1–26 (MVWLARDSCVAAVILLLTVLSPPVAL), serve as a signal peptide directing secretion. The beta-1 stretch occupies residues 27–120 (VRDPTPRFLE…EISESFLVPR (94 aa)). The Extracellular segment spans residues 27 to 226 (VRDPTPRFLE…AQSTSAQNKK (200 aa)). 2 disulfide bridges follow: C42–C106 and C144–C200. N-linked (GlcNAc...) asparagine glycosylation is present at N46. A beta-2 region spans residues 121-215 (TVEPKVTVYP…SLPSPVRVEW (95 aa)). The Ig-like C1-type domain occupies 124–228 (PKVTVYPSKT…STSAQNKKMS (105 aa)). The interval 216–226 (KAQSTSAQNKK) is connecting peptide. A helical transmembrane segment spans residues 227–248 (MSGVGGIVLGLLFLGAGLFVYF). Residues 249–264 (RNQKGQSGLQPTGLLN) are Cytoplasmic-facing.

It belongs to the MHC class II family.

The protein resides in the membrane. Its function is as follows. Involved in the presentation of foreign antigens to the immune system. The sequence is that of Rano class II histocompatibility antigen, D-1 beta chain (RT1-Db1) from Rattus norvegicus (Rat).